A 208-amino-acid chain; its full sequence is Large ribosomal subunit protein uL4 (208 aa).

The segment at 44-79 is disordered; it reads QRQGTHKSKERSEISGSTRKIGRQKGGGGARRGDMN.

It belongs to the universal ribosomal protein uL4 family. As to quaternary structure, part of the 50S ribosomal subunit.

Functionally, one of the primary rRNA binding proteins, this protein initially binds near the 5'-end of the 23S rRNA. It is important during the early stages of 50S assembly. It makes multiple contacts with different domains of the 23S rRNA in the assembled 50S subunit and ribosome. Forms part of the polypeptide exit tunnel. The chain is Large ribosomal subunit protein uL4 from Bacteroides thetaiotaomicron (strain ATCC 29148 / DSM 2079 / JCM 5827 / CCUG 10774 / NCTC 10582 / VPI-5482 / E50).